An 896-amino-acid polypeptide reads, in one-letter code: Putative mannosylglycerate hydrolase (896 aa).

Positions 12, 14, 125, and 348 each coordinate a divalent metal cation. The Nucleophile role is filled by Asp125.

This sequence belongs to the glycosyl hydrolase 38 family. A divalent metal cation is required as a cofactor.

It carries out the reaction (2R)-2-O-(6-phospho-alpha-D-mannosyl)-glycerate + H2O = alpha-D-mannose 6-phosphate + (R)-glycerate. In terms of biological role, may hydrolyze 6-phospho-mannosyl-D-glycerate to mannose-6-phosphate and glycerate. The protein is Putative mannosylglycerate hydrolase (mngB) of Halalkalibacterium halodurans (strain ATCC BAA-125 / DSM 18197 / FERM 7344 / JCM 9153 / C-125) (Bacillus halodurans).